A 610-amino-acid chain; its full sequence is UvrABC system protein C (610 aa).

Residues 16 to 94 (SQPGVYRMYD…IKLYQPRYNV (79 aa)) form the GIY-YIG domain. The 36-residue stretch at 204-239 (DQVINQLVSRMEQASQNLAFEEAARLRDQIQAVRRV) folds into the UVR domain.

The protein belongs to the UvrC family. In terms of assembly, interacts with UvrB in an incision complex.

It is found in the cytoplasm. The UvrABC repair system catalyzes the recognition and processing of DNA lesions. UvrC both incises the 5' and 3' sides of the lesion. The N-terminal half is responsible for the 3' incision and the C-terminal half is responsible for the 5' incision. This chain is UvrABC system protein C, found in Cronobacter sakazakii (strain ATCC BAA-894) (Enterobacter sakazakii).